The sequence spans 94 residues: Secretoglobin family 1C member 1 (94 aa).

The signal sequence occupies residues 1–22 (MKGSSALLVALTVLCICGLTRA).

Belongs to the secretoglobin family. In terms of tissue distribution, expressed in the olfactory mucosa.

It localises to the secreted. In Rattus norvegicus (Rat), this protein is Secretoglobin family 1C member 1 (Scgb1c1).